The chain runs to 1319 residues: Chitin-binding domain protein cbd-1 (1319 aa).

The N-terminal stretch at 1-19 (MGPQLATVSLLLLTFFSNS) is a signal peptide. Chitin-binding type-2 domains are found at residues 28–83 (ATEC…ECRV), 96–141 (EFDC…TQDC), and 190–236 (DFDC…QSCD). Intrachain disulfides connect Cys61-Cys72, Cys128-Cys141, and Cys222-Cys235. Positions 250–271 (YSTSTITTPQEDDSEYSSTTSA) are disordered. The Chitin-binding type-2 4 domain maps to 304 to 357 (PFVCQEGQVNSFGMCSSRFNRCQNNSVRSKQCPVNTLFESSLVMCVFDLPQCQP). An N-linked (GlcNAc...) asparagine glycan is attached at Asn327. Cys335 and Cys348 are disulfide-bonded. The interval 504 to 524 (KNRHSKKQLGPHEDPDGYDDE) is disordered. The span at 513-524 (GPHEDPDGYDDE) shows a compositional bias: basic and acidic residues. One can recognise a Chitin-binding type-2 5 domain in the interval 566 to 614 (NKDCQQYTTPTFLTFGDCFDQFIFCSGNGINRMAACPIGETFDKTLRSC). Cys601 and Cys614 form a disulfide bridge. Residues 649–682 (VTTQSTWNDQPSTTQAPNSYESYTTQYSSNDVPS) form a disordered region. 3 Chitin-binding type-2 domains span residues 689 to 745 (GDRC…ECGS), 782 to 838 (GDRC…KCQT), and 883 to 942 (VDTC…ACDE). Residues Cys721 and Cys734 are joined by a disulfide bond. The tract at residues 742-764 (ECGSQGSTSSPVITTPGQDQSSN) is disordered. A compositionally biased stretch (polar residues) spans 745 to 764 (SQGSTSSPVITTPGQDQSSN). Cystine bridges form between Cys814/Cys827 and Cys916/Cys929. The segment covering 984–995 (TGSTKYSTTDSG) has biased composition (polar residues). Positions 984-1031 (TGSTKYSTTDSGEYTIPYGDETTSTRSYDRADNDSEDEEEDDVEHDQK) are disordered. N-linked (GlcNAc...) asparagine glycosylation is present at Asn1016. The span at 1017–1027 (DSEDEEEDDVE) shows a compositional bias: acidic residues. Chitin-binding type-2 domains are found at residues 1029-1081 (DQKC…GCGK), 1105-1163 (EGRC…ACTV), 1179-1237 (SAFC…GCEN), and 1242-1298 (NGEC…SCSG). 4 disulfides stabilise this stretch: Cys1060–Cys1073, Cys1139–Cys1152, Cys1213–Cys1226, and Cys1274–Cys1287. Residues 1297-1312 (SGQASDSNSSYGSSTY) are compositionally biased toward low complexity. Residues 1297-1319 (SGQASDSNSSYGSSTYNDDKSGY) form a disordered region. An N-linked (GlcNAc...) asparagine glycan is attached at Asn1304.

The protein localises to the secreted. It localises to the extracellular space. The protein resides in the extracellular matrix. In unfertilized oocytes, maintains egg-1 and egg-2 at the plasma membrane together with chitin synthase chs-1 and kinase mbk-2. Essential for the formation of a continuous and cohesive chitin layer following fertilization. The protein is Chitin-binding domain protein cbd-1 of Caenorhabditis elegans.